Here is a 428-residue protein sequence, read N- to C-terminus: Ribulose bisphosphate carboxylase (428 aa).

Catalysis depends on Lys151, which acts as the Proton acceptor. Lys153 lines the substrate pocket. Mg(2+) is bound by residues Lys177, Asp179, and Glu180. The residue at position 177 (Lys177) is an N6-carboxylysine. His270 (proton acceptor) is an active-site residue. Residues Arg271, His303, 354–356, and 376–379 each bind substrate; these read SGG and QFGG.

The protein belongs to the RuBisCO large chain family. Type III subfamily. In terms of assembly, homodimer or homodecamer. In contrast to form I RuBisCO, the form III RuBisCO is composed solely of large subunits. The cofactor is Mg(2+).

The catalysed reaction is 2 (2R)-3-phosphoglycerate + 2 H(+) = D-ribulose 1,5-bisphosphate + CO2 + H2O. It catalyses the reaction D-ribulose 1,5-bisphosphate + O2 = 2-phosphoglycolate + (2R)-3-phosphoglycerate + 2 H(+). Its function is as follows. Catalyzes the addition of molecular CO(2) and H(2)O to ribulose 1,5-bisphosphate (RuBP), generating two molecules of 3-phosphoglycerate (3-PGA). Functions in an archaeal AMP degradation pathway, together with AMP phosphorylase and R15P isomerase. This is Ribulose bisphosphate carboxylase from Methanosarcina mazei (strain ATCC BAA-159 / DSM 3647 / Goe1 / Go1 / JCM 11833 / OCM 88) (Methanosarcina frisia).